A 622-amino-acid chain; its full sequence is Chaperone protein HscA homolog (622 aa).

It belongs to the heat shock protein 70 family.

Chaperone involved in the maturation of iron-sulfur cluster-containing proteins. Has a low intrinsic ATPase activity which is markedly stimulated by HscB. This Burkholderia multivorans (strain ATCC 17616 / 249) protein is Chaperone protein HscA homolog.